Reading from the N-terminus, the 223-residue chain is MDTLKQLIDYYQTNGSYVMEEFWRHFLMSAYGVIFAAIIAIPLGVYIARKKRLAGWVIQIANIIQTIPALAMLAVLMLIMGLGTNTVVLSLFLYSLLPILKNTYTGIRNVDGALLESGKAMGMTKWQVLRLIEMPLALSVIMAGIRNALVIAIGVAAIGTFVGAGGLGDIIVRGTNATNGTAIILAGAIPTAVMAILADVLLGWVERTLNPVKNKRKPLTEAL.

Residues 22-202 (FWRHFLMSAY…VMAILADVLL (181 aa)) enclose the ABC transmembrane type-1 domain. A run of 5 helical transmembrane segments spans residues 27 to 47 (LMSAYGVIFAAIIAIPLGVYI), 63 to 83 (IIQTIPALAMLAVLMLIMGLG), 87 to 107 (VVLSLFLYSLLPILKNTYTGI), 148 to 168 (ALVIAIGVAAIGTFVGAGGLG), and 182 to 202 (AIILAGAIPTAVMAILADVLL).

The protein belongs to the binding-protein-dependent transport system permease family. The complex is composed of two ATP-binding proteins (OpuCA), two transmembrane proteins (OpuCB and OpuCD) and a solute-binding protein (OpuCC).

The protein localises to the cell membrane. In terms of biological role, part of the ABC transporter complex OpuCABCD involved in carnitine uptake. Probably responsible for the translocation of the substrate across the membrane. Involved, with BetL and GbuABC, in osmoprotection and cryoprotection of Listeria. Can also mediate weak glycine betaine transport. The protein is Carnitine transport permease protein OpuCD (opuCD) of Listeria monocytogenes serotype 1/2a (strain 10403S).